A 333-amino-acid polypeptide reads, in one-letter code: Photosystem II assembly lipoprotein Ycf48 (333 aa).

Positions 1 to 23 are cleaved as a signal peptide; sequence MNRLLSSAVNLLLVLVLGVGLSG. C24 is lipidated: N-palmitoyl cysteine. The S-diacylglycerol cysteine moiety is linked to residue C24.

It belongs to the Ycf48 family. Part of early PSII assembly complexes which includes D1 (psbA) and PsbI; not found in mature PSII. Binds to the lumenal side of PSII complexes. Interacts with YidC.

It localises to the cellular thylakoid membrane. In terms of biological role, a factor required for optimal assembly of photosystem II (PSII), acting in the early stages of PSII assembly. Also plays a role in replacement of photodamaged D1 (psbA). Assists YidC in synthesis of chlorophyll-binding proteins. This chain is Photosystem II assembly lipoprotein Ycf48, found in Synechococcus sp. (strain CC9902).